The primary structure comprises 406 residues: Phosphopentomutase (406 aa).

Residues aspartate 10, aspartate 305, histidine 310, aspartate 346, histidine 347, and histidine 358 each coordinate Mn(2+).

The protein belongs to the phosphopentomutase family. The cofactor is Mn(2+).

The protein resides in the cytoplasm. It carries out the reaction 2-deoxy-alpha-D-ribose 1-phosphate = 2-deoxy-D-ribose 5-phosphate. The enzyme catalyses alpha-D-ribose 1-phosphate = D-ribose 5-phosphate. The protein operates within carbohydrate degradation; 2-deoxy-D-ribose 1-phosphate degradation; D-glyceraldehyde 3-phosphate and acetaldehyde from 2-deoxy-alpha-D-ribose 1-phosphate: step 1/2. Its function is as follows. Isomerase that catalyzes the conversion of deoxy-ribose 1-phosphate (dRib-1-P) and ribose 1-phosphate (Rib-1-P) to deoxy-ribose 5-phosphate (dRib-5-P) and ribose 5-phosphate (Rib-5-P), respectively. In Rhizobium etli (strain ATCC 51251 / DSM 11541 / JCM 21823 / NBRC 15573 / CFN 42), this protein is Phosphopentomutase.